A 182-amino-acid chain; its full sequence is Protein LURP-one-related 7 (182 aa).

This sequence belongs to the LOR family.

Might be related to the phospholipid scramblase and tubby-like superfamily of membrane tethered transcription factors. This Arabidopsis thaliana (Mouse-ear cress) protein is Protein LURP-one-related 7.